Reading from the N-terminus, the 300-residue chain is Tyrosine recombinase XerC (300 aa).

Residues 1–86 form the Core-binding (CB) domain; sequence MESVLDAFDQ…AVKTFTAWAV (86 aa). The Tyr recombinase domain occupies 107–294; it reads TLPAVLRQDQ…TVARLRAVHD (188 aa). Residues arginine 151, lysine 175, histidine 246, arginine 249, and histidine 272 contribute to the active site. Catalysis depends on tyrosine 281, which acts as the O-(3'-phospho-DNA)-tyrosine intermediate.

Belongs to the 'phage' integrase family. XerC subfamily. Forms a cyclic heterotetrameric complex composed of two molecules of XerC and two molecules of XerD.

It is found in the cytoplasm. Site-specific tyrosine recombinase, which acts by catalyzing the cutting and rejoining of the recombining DNA molecules. The XerC-XerD complex is essential to convert dimers of the bacterial chromosome into monomers to permit their segregation at cell division. It also contributes to the segregational stability of plasmids. This is Tyrosine recombinase XerC from Mycobacterium sp. (strain KMS).